The following is a 124-amino-acid chain: uncharacterized protein (124 aa).

It belongs to the asfivirus H124R family.

It localises to the virion. This is an uncharacterized protein from Ornithodoros (relapsing fever ticks).